The primary structure comprises 334 residues: Formamidase (334 aa).

Positions 14–260 (FLVAAIQFPV…WEIVTGEIYP (247 aa)) constitute a CN hydrolase domain. The active-site Proton acceptor is the Glu60. Catalysis depends on Lys133, which acts as the Proton donor. Cys166 acts as the Nucleophile in catalysis.

It belongs to the carbon-nitrogen hydrolase superfamily. Aliphatic amidase family.

It catalyses the reaction formamide + H2O = formate + NH4(+). Functionally, is an aliphatic amidase with a restricted substrate specificity, as it only hydrolyzes formamide. The polypeptide is Formamidase (Helicobacter pylori (strain P12)).